Consider the following 41-residue polypeptide: Divisome-associated membrane protein Blr (41 aa).

Over 1-3 (MNR) the chain is Cytoplasmic. The chain crosses the membrane as a helical span at residues 4–24 (LIELTGWIVLVVSVILLGVAS). Residues 25–41 (HIDNYQPPEQSASVQHK) are Periplasmic-facing.

In terms of assembly, interacts with FtsL and several other divisomal proteins, including FtsI, FtsK, FtsN, FtsQ, FtsW and YmgF. Post-translationally, the N-terminus is blocked.

It is found in the cell inner membrane. Functionally, component of the cell division machinery, which is probably involved in the stabilization of the divisome under certain stress conditions. In Escherichia coli (strain K12), this protein is Divisome-associated membrane protein Blr (blr).